Here is a 379-residue protein sequence, read N- to C-terminus: Copper-containing nitrite reductase (379 aa).

Residues 1–32 (MSEQFRLTRRSMLAGAAVAGALAPVVTSVAHA) constitute a signal peptide (tat-type signal). Plastocyanin-like domains lie at 33 to 214 (EGGG…YDKV) and 215 to 379 (YYVG…PTSG). Cu cation is bound by residues H134, H139, H174, C175, H184, M189, and H345.

This sequence belongs to the multicopper oxidase family. As to quaternary structure, homotrimer. Requires Cu(2+) as cofactor. Cu(+) serves as cofactor. It depends on FAD as a cofactor. In terms of processing, predicted to be exported by the Tat system. The position of the signal peptide cleavage has not been experimentally proven.

The protein resides in the periplasm. The enzyme catalyses nitric oxide + Fe(III)-[cytochrome c] + H2O = Fe(II)-[cytochrome c] + nitrite + 2 H(+). Its pathway is nitrogen metabolism; nitrate reduction (denitrification); dinitrogen from nitrate: step 2/4. This is Copper-containing nitrite reductase (nirU) from Neorhizobium galegae (Rhizobium galegae).